A 1006-amino-acid polypeptide reads, in one-letter code: Beta-galactosidase (1006 aa).

The first 19 residues, M1–A19, serve as a signal peptide directing secretion. The N-linked (GlcNAc...) asparagine glycan is linked to N156. E200 acts as the Proton donor in catalysis. The active-site Nucleophile is the E298. N-linked (GlcNAc...) asparagine glycans are attached at residues N373, N402, N422, N478, N522, N622, N739, N760, N777, and N805.

It belongs to the glycosyl hydrolase 35 family.

The catalysed reaction is Hydrolysis of terminal non-reducing beta-D-galactose residues in beta-D-galactosides.. Cleaves beta-linked terminal galactosyl residues from gangliosides, glycoproteins, and glycosaminoglycans. The protein is Beta-galactosidase (lacA) of Aspergillus niger.